The chain runs to 335 residues: Beta-ketoacyl-[acyl-carrier-protein] synthase III (335 aa).

Residues C119 and H261 contribute to the active site. The tract at residues 262-266 is ACP-binding; the sequence is QANQR. The active site involves N291.

The protein belongs to the thiolase-like superfamily. FabH family. Homodimer.

The protein resides in the cytoplasm. The enzyme catalyses malonyl-[ACP] + acetyl-CoA + H(+) = 3-oxobutanoyl-[ACP] + CO2 + CoA. The protein operates within lipid metabolism; fatty acid biosynthesis. In terms of biological role, catalyzes the condensation reaction of fatty acid synthesis by the addition to an acyl acceptor of two carbons from malonyl-ACP. Catalyzes the first condensation reaction which initiates fatty acid synthesis and may therefore play a role in governing the total rate of fatty acid production. Possesses both acetoacetyl-ACP synthase and acetyl transacylase activities. Its substrate specificity determines the biosynthesis of branched-chain and/or straight-chain of fatty acids. In Prochlorococcus marinus (strain MIT 9301), this protein is Beta-ketoacyl-[acyl-carrier-protein] synthase III.